A 114-amino-acid polypeptide reads, in one-letter code: Transmembrane protein 14B (114 aa).

The next 4 helical transmembrane spans lie at 8–28 (LVPL…GGIV), 34–54 (GSVP…LGAY), 60–80 (PRNV…VMGM), and 83–103 (YYYG…LMAA).

The protein belongs to the TMEM14 family. Interacts with IQGAP1; this interaction promotes phosphorylation and nuclear translocation of IQGAP1. Mainly expressed in the outer subventricular zone (OSVZ) of the fetal brains.

It is found in the membrane. In terms of biological role, primate-specific protein involved in cortical expansion and folding in the developing neocortex. May drive neural progenitor proliferation through nuclear translocation of IQGAP1, which in turn promotes G1/S cell cycle transitions. The protein is Transmembrane protein 14B (TMEM14B) of Homo sapiens (Human).